The chain runs to 316 residues: 4-hydroxy-3-methylbut-2-enyl diphosphate reductase (316 aa).

A [4Fe-4S] cluster-binding site is contributed by C12. H43 and H81 together coordinate (2E)-4-hydroxy-3-methylbut-2-enyl diphosphate. H43 and H81 together coordinate dimethylallyl diphosphate. Residues H43 and H81 each coordinate isopentenyl diphosphate. Residue C103 participates in [4Fe-4S] cluster binding. H131 contacts (2E)-4-hydroxy-3-methylbut-2-enyl diphosphate. H131 contacts dimethylallyl diphosphate. An isopentenyl diphosphate-binding site is contributed by H131. The Proton donor role is filled by E133. (2E)-4-hydroxy-3-methylbut-2-enyl diphosphate is bound at residue T170. C198 lines the [4Fe-4S] cluster pocket. S226, N228, and S271 together coordinate (2E)-4-hydroxy-3-methylbut-2-enyl diphosphate. The dimethylallyl diphosphate site is built by S226, N228, and S271. The isopentenyl diphosphate site is built by S226, N228, and S271.

The protein belongs to the IspH family. It depends on [4Fe-4S] cluster as a cofactor.

The catalysed reaction is isopentenyl diphosphate + 2 oxidized [2Fe-2S]-[ferredoxin] + H2O = (2E)-4-hydroxy-3-methylbut-2-enyl diphosphate + 2 reduced [2Fe-2S]-[ferredoxin] + 2 H(+). It catalyses the reaction dimethylallyl diphosphate + 2 oxidized [2Fe-2S]-[ferredoxin] + H2O = (2E)-4-hydroxy-3-methylbut-2-enyl diphosphate + 2 reduced [2Fe-2S]-[ferredoxin] + 2 H(+). It participates in isoprenoid biosynthesis; dimethylallyl diphosphate biosynthesis; dimethylallyl diphosphate from (2E)-4-hydroxy-3-methylbutenyl diphosphate: step 1/1. The protein operates within isoprenoid biosynthesis; isopentenyl diphosphate biosynthesis via DXP pathway; isopentenyl diphosphate from 1-deoxy-D-xylulose 5-phosphate: step 6/6. In terms of biological role, catalyzes the conversion of 1-hydroxy-2-methyl-2-(E)-butenyl 4-diphosphate (HMBPP) into a mixture of isopentenyl diphosphate (IPP) and dimethylallyl diphosphate (DMAPP). Acts in the terminal step of the DOXP/MEP pathway for isoprenoid precursor biosynthesis. The protein is 4-hydroxy-3-methylbut-2-enyl diphosphate reductase of Geobacillus thermodenitrificans (strain NG80-2).